The sequence spans 332 residues: L-lactate dehydrogenase A chain (332 aa).

NAD(+) contacts are provided by residues 29 to 57 (GAVG…IEDK) and Arg99. Positions 106, 138, and 169 each coordinate substrate. Residue Asn138 participates in NAD(+) binding. The active-site Proton acceptor is His193. Substrate is bound at residue Thr248.

This sequence belongs to the LDH/MDH superfamily. LDH family. Homotetramer.

It is found in the cytoplasm. It carries out the reaction (S)-lactate + NAD(+) = pyruvate + NADH + H(+). The protein operates within fermentation; pyruvate fermentation to lactate; (S)-lactate from pyruvate: step 1/1. Functionally, interconverts simultaneously and stereospecifically pyruvate and lactate with concomitant interconversion of NADH and NAD(+). This is L-lactate dehydrogenase A chain (LDHA) from Trachemys scripta elegans (Red-eared slider turtle).